Consider the following 793-residue polypeptide: Endonuclease MutS2 (793 aa).

335-342 is an ATP binding site; sequence GPNTGGKT. The 76-residue stretch at 718–793 folds into the Smr domain; it reads IDVRGYNLEE…ESGVTIVELR (76 aa).

It belongs to the DNA mismatch repair MutS family. MutS2 subfamily. In terms of assembly, homodimer. Binds to stalled ribosomes, contacting rRNA.

Endonuclease that is involved in the suppression of homologous recombination and thus may have a key role in the control of bacterial genetic diversity. In terms of biological role, acts as a ribosome collision sensor, splitting the ribosome into its 2 subunits. Detects stalled/collided 70S ribosomes which it binds and splits by an ATP-hydrolysis driven conformational change. Acts upstream of the ribosome quality control system (RQC), a ribosome-associated complex that mediates the extraction of incompletely synthesized nascent chains from stalled ribosomes and their subsequent degradation. Probably generates substrates for RQC. The polypeptide is Endonuclease MutS2 (Acetivibrio thermocellus (strain ATCC 27405 / DSM 1237 / JCM 9322 / NBRC 103400 / NCIMB 10682 / NRRL B-4536 / VPI 7372) (Clostridium thermocellum)).